The chain runs to 399 residues: PCI domain-containing protein 2 (399 aa).

One can recognise a PCI domain in the interval 210-391 (VTFKYYVGRK…QKLVVSKQNP (182 aa)).

It belongs to the CSN12 family.

The chain is PCI domain-containing protein 2 (pcid2) from Xenopus laevis (African clawed frog).